The following is a 238-amino-acid chain: Ribonuclease PH (238 aa).

Residues Arg86 and 124 to 126 contribute to the phosphate site; that span reads GTR.

It belongs to the RNase PH family. Homohexameric ring arranged as a trimer of dimers.

It carries out the reaction tRNA(n+1) + phosphate = tRNA(n) + a ribonucleoside 5'-diphosphate. Functionally, phosphorolytic 3'-5' exoribonuclease that plays an important role in tRNA 3'-end maturation. Removes nucleotide residues following the 3'-CCA terminus of tRNAs; can also add nucleotides to the ends of RNA molecules by using nucleoside diphosphates as substrates, but this may not be physiologically important. Probably plays a role in initiation of 16S rRNA degradation (leading to ribosome degradation) during starvation. The sequence is that of Ribonuclease PH from Haemophilus ducreyi (strain 35000HP / ATCC 700724).